A 131-amino-acid chain; its full sequence is Profilin (131 aa).

It belongs to the profilin family. Occurs in many kinds of cells as a complex with monomeric actin in a 1:1 ratio.

The protein resides in the cytoplasm. The protein localises to the cytoskeleton. Binds to actin and affects the structure of the cytoskeleton. At high concentrations, profilin prevents the polymerization of actin, whereas it enhances it at low concentrations. By binding to PIP2, it inhibits the formation of IP3 and DG. This is Profilin from Chenopodium album (Fat hen).